A 2294-amino-acid polypeptide reads, in one-letter code: Protein Ycf2 (2294 aa).

ATP is bound at residue 1635 to 1642 (GSIGTGRS).

The protein belongs to the Ycf2 family.

It is found in the plastid. The protein localises to the chloroplast stroma. In terms of biological role, probable ATPase of unknown function. Its presence in a non-photosynthetic plant (Epifagus virginiana) and experiments in tobacco indicate that it has an essential function which is probably not related to photosynthesis. This chain is Protein Ycf2, found in Ranunculus macranthus (Large buttercup).